The following is a 392-amino-acid chain: Formate-dependent phosphoribosylglycinamide formyltransferase (392 aa).

Residues 22–23 (EL) and Glu-82 contribute to the N(1)-(5-phospho-beta-D-ribosyl)glycinamide site. ATP-binding positions include Arg-114, Lys-155, 160–165 (SSGKGQ), 195–198 (EGVV), and Glu-203. An ATP-grasp domain is found at 119–308 (RLAAEELQLP…EFALHVRAFL (190 aa)). 2 residues coordinate Mg(2+): Glu-267 and Glu-279. N(1)-(5-phospho-beta-D-ribosyl)glycinamide-binding positions include Asp-286, Lys-355, and 362–363 (RR).

It belongs to the PurK/PurT family. In terms of assembly, homodimer.

The catalysed reaction is N(1)-(5-phospho-beta-D-ribosyl)glycinamide + formate + ATP = N(2)-formyl-N(1)-(5-phospho-beta-D-ribosyl)glycinamide + ADP + phosphate + H(+). The protein operates within purine metabolism; IMP biosynthesis via de novo pathway; N(2)-formyl-N(1)-(5-phospho-D-ribosyl)glycinamide from N(1)-(5-phospho-D-ribosyl)glycinamide (formate route): step 1/1. Its function is as follows. Involved in the de novo purine biosynthesis. Catalyzes the transfer of formate to 5-phospho-ribosyl-glycinamide (GAR), producing 5-phospho-ribosyl-N-formylglycinamide (FGAR). Formate is provided by PurU via hydrolysis of 10-formyl-tetrahydrofolate. This Shigella boydii serotype 18 (strain CDC 3083-94 / BS512) protein is Formate-dependent phosphoribosylglycinamide formyltransferase.